A 1020-amino-acid chain; its full sequence is Probable leucine-rich repeat receptor-like serine/threonine-protein kinase At3g14840 (1020 aa).

Residues 1–26 (MSLNRQLLFTYYFIVSLILFSDFVSS) form the signal peptide. The Extracellular segment spans residues 27–614 (ATLPKEEVDA…GTGGGSSVGT (588 aa)). N-linked (GlcNAc...) asparagine glycosylation is found at Asn-50 and Asn-81. 10 LRR repeats span residues 86-110 (ICHV…LSGL), 111-134 (PFLQ…WGAS), 136-157 (LLNI…LGNL), 158-181 (TTLS…LGNL), 182-204 (PNLK…TFAK), 206-231 (TTLT…NWKG), 253-276 (LGTL…PLRN), 277-301 (MTSM…LGQN), 302-324 (RKLK…TYSG), and 326-349 (SDVD…MVDQ). N-linked (GlcNAc...) asparagine glycans are attached at residues Asn-124, Asn-138, and Asn-156. The N-linked (GlcNAc...) asparagine glycan is linked to Asn-193. Residues Asn-276 and Asn-289 are each glycosylated (N-linked (GlcNAc...) asparagine). Residues Asn-359, Asn-386, Asn-389, Asn-417, Asn-461, Asn-469, and Asn-498 are each glycosylated (N-linked (GlcNAc...) asparagine). The stretch at 479–501 (QARLSAISLTYQALCLGKGNYTV) is one LRR 11 repeat. A helical transmembrane segment spans residues 615–635 (VVGSVIASTVFLVLLIGGILW). At 636–1020 (WRGCLRPKSQ…LDSAYWNTRT (385 aa)) the chain is on the cytoplasmic side. The Protein kinase domain occupies 672–949 (FDPANKIGEG…VSMLEGHSTV (278 aa)). ATP contacts are provided by residues 678-686 (IGEGGFGPV) and Lys-700. Tyr-745 carries the post-translational modification Phosphotyrosine. Residue Asp-798 is the Proton acceptor of the active site. Ser-831 is modified (phosphoserine). 2 positions are modified to phosphothreonine: Thr-832 and Thr-837. Tyr-845 carries the post-translational modification Phosphotyrosine.

The protein belongs to the protein kinase superfamily. Ser/Thr protein kinase family.

Its subcellular location is the cell membrane. It catalyses the reaction L-seryl-[protein] + ATP = O-phospho-L-seryl-[protein] + ADP + H(+). It carries out the reaction L-threonyl-[protein] + ATP = O-phospho-L-threonyl-[protein] + ADP + H(+). This Arabidopsis thaliana (Mouse-ear cress) protein is Probable leucine-rich repeat receptor-like serine/threonine-protein kinase At3g14840 (LRR-RLK).